Consider the following 366-residue polypeptide: GDSL esterase/lipase At1g74460 (366 aa).

An N-terminal signal peptide occupies residues 1-20; sequence MKFCAIFVLFIVLAINGYDC. Serine 30 (nucleophile) is an active-site residue. N-linked (GlcNAc...) asparagine glycosylation is found at asparagine 113 and asparagine 260. Catalysis depends on residues aspartate 320 and histidine 323.

The protein belongs to the 'GDSL' lipolytic enzyme family.

It is found in the secreted. The polypeptide is GDSL esterase/lipase At1g74460 (Arabidopsis thaliana (Mouse-ear cress)).